Consider the following 348-residue polypeptide: Putative [LysW]-L-2-aminoadipate/[LysW]-L-glutamate phosphate reductase (348 aa).

9–12 (SGYV) is an NADP(+) binding site. The active site involves cysteine 149. Asparagine 315 contacts NADP(+).

This sequence belongs to the NAGSA dehydrogenase family. Type 1 subfamily. LysY sub-subfamily.

The protein resides in the cytoplasm. It carries out the reaction [amino-group carrier protein]-C-terminal-N-(1-carboxy-5-oxopentan-1-yl)-L-glutamine + phosphate + NADP(+) = [amino-group carrier protein]-C-terminal-N-(1-carboxy-5-phosphooxy-5-oxopentan-1-yl)-L-glutamine + NADPH + H(+). It catalyses the reaction [amino-group carrier protein]-C-terminal-gamma-(L-glutamyl-5-semialdehyde)-L-glutamate + phosphate + NADP(+) = [amino-group carrier protein]-C-terminal-gamma-(5-phospho-L-glutamyl)-L-glutamate + NADPH + H(+). Its pathway is amino-acid biosynthesis; L-lysine biosynthesis via AAA pathway; L-lysine from L-alpha-aminoadipate (Thermus route): step 3/5. The protein operates within amino-acid biosynthesis; L-arginine biosynthesis. Its function is as follows. Involved in both the arginine and lysine biosynthetic pathways. This chain is Putative [LysW]-L-2-aminoadipate/[LysW]-L-glutamate phosphate reductase, found in Nitrosopumilus maritimus (strain SCM1).